Consider the following 196-residue polypeptide: Holliday junction branch migration complex subunit RuvA (196 aa).

Residues 1 to 61 (MYEYFEGIVT…DTGITLYGFQ (61 aa)) form a domain I region. The segment at 62 to 140 (SEDDKGLFLK…DYVARLDRQD (79 aa)) is domain II. Residues 141–149 (EEQGNISPA) form a flexible linker region. A domain III region spans residues 149–196 (ALNDALLALIALGYTQKEVDRITTKLEEVNADTADQYIKKGLALLLKK).

It belongs to the RuvA family. Homotetramer. Forms an RuvA(8)-RuvB(12)-Holliday junction (HJ) complex. HJ DNA is sandwiched between 2 RuvA tetramers; dsDNA enters through RuvA and exits via RuvB. An RuvB hexamer assembles on each DNA strand where it exits the tetramer. Each RuvB hexamer is contacted by two RuvA subunits (via domain III) on 2 adjacent RuvB subunits; this complex drives branch migration. In the full resolvosome a probable DNA-RuvA(4)-RuvB(12)-RuvC(2) complex forms which resolves the HJ.

Its subcellular location is the cytoplasm. In terms of biological role, the RuvA-RuvB-RuvC complex processes Holliday junction (HJ) DNA during genetic recombination and DNA repair, while the RuvA-RuvB complex plays an important role in the rescue of blocked DNA replication forks via replication fork reversal (RFR). RuvA specifically binds to HJ cruciform DNA, conferring on it an open structure. The RuvB hexamer acts as an ATP-dependent pump, pulling dsDNA into and through the RuvAB complex. HJ branch migration allows RuvC to scan DNA until it finds its consensus sequence, where it cleaves and resolves the cruciform DNA. The polypeptide is Holliday junction branch migration complex subunit RuvA (Lactobacillus helveticus (strain DPC 4571)).